The chain runs to 186 residues: Ribosome maturation factor RimM (186 aa).

The region spanning 103-174 (PEEYHYSDLI…ELQVQPPPGL (72 aa)) is the PRC barrel domain.

The protein belongs to the RimM family. Binds ribosomal protein uS19.

It is found in the cytoplasm. Its function is as follows. An accessory protein needed during the final step in the assembly of 30S ribosomal subunit, possibly for assembly of the head region. Essential for efficient processing of 16S rRNA. May be needed both before and after RbfA during the maturation of 16S rRNA. It has affinity for free ribosomal 30S subunits but not for 70S ribosomes. The sequence is that of Ribosome maturation factor RimM from Synechococcus sp. (strain JA-3-3Ab) (Cyanobacteria bacterium Yellowstone A-Prime).